Consider the following 643-residue polypeptide: Protein THEMIS2 (643 aa).

2 CABIT regions span residues 1–238 (MEPV…TASS) and 239–514 (RHVH…KAKG). The tract at residues 546–631 (EIQAPPPRPP…RQDLDDDEHD (86 aa)) is disordered. Residue threonine 593 is modified to Phosphothreonine. A compositionally biased stretch (basic residues) spans 609–619 (PAHRKGHRPAK). Position 632 is a phosphotyrosine (tyrosine 632).

The protein belongs to the themis family. Interacts with VAV1. Interacts with LAT. Interacts constitutively with GRB2, LYN and PLCG2; these interactions increase the activation of PLCG2 and its downstream pathways following B cell receptor stimulation. Post-translationally, phosphorylation at Tyr-632 is induced by LPS. Phosphorylated by Src kinases (Lck or Fyn) following BCR engagement. In terms of tissue distribution, expressed in different endometrial adenocarcinoma cell lines and various other cell lines apart from the prostate cell line LNCaP and the ovarian cancer cell line BG1.

It localises to the nucleus. The protein localises to the cytoplasm. Its function is as follows. May constitute a control point in macrophage inflammatory response, promoting LPS-induced TLR4-mediated TNF production. Determines the threshold for activation of B cells by low-affinity and low-avidity ligands via PLCG2 activation and its downstream pathways. This Homo sapiens (Human) protein is Protein THEMIS2.